The sequence spans 271 residues: Sec-independent protein translocase protein TatC (271 aa).

A run of 6 helical transmembrane segments spans residues 35–55, 93–113, 124–144, 178–198, 213–233, and 234–254; these read IIWT…WHEQ, AFIA…WLFI, YVLP…VFGY, IILG…LALM, SILV…IMNM, and CVFA…AFLV.

The protein belongs to the TatC family. In terms of assembly, forms a complex with TatA.

The protein localises to the cell inner membrane. Part of the twin-arginine translocation (Tat) system that transports large folded proteins containing a characteristic twin-arginine motif in their signal peptide across membranes. The sequence is that of Sec-independent protein translocase protein TatC from Koribacter versatilis (strain Ellin345).